Reading from the N-terminus, the 2117-residue chain is Tudor domain-containing 6 (2117 aa).

Tudor domains are found at residues 62–118 (DGNP…FFYL), 291–350 (AENL…FFRM), 527–584 (KPVV…FQQL), 757–816 (EPLL…FLKM), and 974–1030 (PQTF…AGDI). The interval 1125–1216 (ASACKKESST…SSKPEVVKPK (92 aa)) is disordered. A compositionally biased stretch (basic and acidic residues) spans 1127–1152 (ACKKESSTGPKRDAIDQVPKSRESHA). 2 stretches are compositionally biased toward polar residues: residues 1153-1174 (IQRS…STNG) and 1181-1209 (DSGT…TSSK). Tudor domains lie at 1282–1340 (DIHE…FASF) and 1485–1543 (CMPV…LSDV).

As to quaternary structure, interacts (via Tudor domain) with buc (when dimethylated on arginine residues); and may be responsible for recruitment of different protein complexes to germ plasm.

It localises to the cytoplasm. Functionally, tudor domain-containing protein involved in germ cell development, more specifically the formation of chromatoid body (during spermiogenesis), Balbiani body (during oogenesis), germ plasm (upon fertilization), and for proper miRNA expression and spliceosome maturation. Required for Balbiani body and germ plasm formation and mobility through interaction with dimethylated arginines in the prion-like protein Bucky ball (buc). Coordinates transcript deposition into future primordial germ cells. Interacts with known germ plasm mRNAs such as vasa, dazl, nanos3 and hook2. The chain is Tudor domain-containing 6 from Danio rerio (Zebrafish).